Consider the following 403-residue polypeptide: High affinity transport system protein p37 (403 aa).

The signal sequence occupies residues 1-23; that stretch reads MLKKLKNFILFSSIFSPIAFAIS. Cysteine 24 is lipidated: N-palmitoyl cysteine. A lipid anchor (S-diacylglycerol cysteine) is attached at cysteine 24.

Its subcellular location is the cell membrane. P37 is part of a high-affinity transport system. This Mesomycoplasma hyorhinis (Mycoplasma hyorhinis) protein is High affinity transport system protein p37 (p37).